We begin with the raw amino-acid sequence, 102 residues long: NADH-quinone oxidoreductase subunit K (102 aa).

The next 3 helical transmembrane spans lie at 6–26, 30–50, and 63–83; these read LIAM…GVLA, IMFQ…GFVA, and MFIL…ALFL.

The protein belongs to the complex I subunit 4L family. NDH-1 is composed of 14 different subunits. Subunits NuoA, H, J, K, L, M, N constitute the membrane sector of the complex.

It is found in the cell inner membrane. The catalysed reaction is a quinone + NADH + 5 H(+)(in) = a quinol + NAD(+) + 4 H(+)(out). In terms of biological role, NDH-1 shuttles electrons from NADH, via FMN and iron-sulfur (Fe-S) centers, to quinones in the respiratory chain. The immediate electron acceptor for the enzyme in this species is believed to be ubiquinone. Couples the redox reaction to proton translocation (for every two electrons transferred, four hydrogen ions are translocated across the cytoplasmic membrane), and thus conserves the redox energy in a proton gradient. The sequence is that of NADH-quinone oxidoreductase subunit K from Rhodopseudomonas palustris (strain BisB5).